The primary structure comprises 407 residues: Imidazolonepropionase (407 aa).

Fe(3+) contacts are provided by His68 and His70. Zn(2+) is bound by residues His68 and His70. Residues Arg77, Tyr140, and His173 each coordinate 4-imidazolone-5-propanoate. Tyr140 provides a ligand contact to N-formimidoyl-L-glutamate. His238 contacts Fe(3+). Position 238 (His238) interacts with Zn(2+). Gln241 is a 4-imidazolone-5-propanoate binding site. Asp313 lines the Fe(3+) pocket. Residue Asp313 participates in Zn(2+) binding. Positions 315 and 317 each coordinate N-formimidoyl-L-glutamate. Thr318 is a 4-imidazolone-5-propanoate binding site.

This sequence belongs to the metallo-dependent hydrolases superfamily. HutI family. The cofactor is Zn(2+). Requires Fe(3+) as cofactor.

The protein localises to the cytoplasm. It catalyses the reaction 4-imidazolone-5-propanoate + H2O = N-formimidoyl-L-glutamate. Its pathway is amino-acid degradation; L-histidine degradation into L-glutamate; N-formimidoyl-L-glutamate from L-histidine: step 3/3. Catalyzes the hydrolytic cleavage of the carbon-nitrogen bond in imidazolone-5-propanoate to yield N-formimidoyl-L-glutamate. It is the third step in the universal histidine degradation pathway. The chain is Imidazolonepropionase from Burkholderia cenocepacia (strain ATCC BAA-245 / DSM 16553 / LMG 16656 / NCTC 13227 / J2315 / CF5610) (Burkholderia cepacia (strain J2315)).